We begin with the raw amino-acid sequence, 320 residues long: Malate dehydrogenase (320 aa).

NAD(+)-binding positions include G10–G15 and D34. Residues R83 and R89 each coordinate substrate. Residues N96 and I119–N121 contribute to the NAD(+) site. Positions 121 and 152 each coordinate substrate. H176 acts as the Proton acceptor in catalysis.

The protein belongs to the LDH/MDH superfamily. MDH type 3 family.

It carries out the reaction (S)-malate + NAD(+) = oxaloacetate + NADH + H(+). In terms of biological role, catalyzes the reversible oxidation of malate to oxaloacetate. The chain is Malate dehydrogenase from Rhizobium etli (strain CIAT 652).